Here is a 315-residue protein sequence, read N- to C-terminus: Transaldolase (315 aa).

K125 (schiff-base intermediate with substrate) is an active-site residue.

Belongs to the transaldolase family. Type 1 subfamily. Homodimer.

The protein resides in the cytoplasm. It carries out the reaction D-sedoheptulose 7-phosphate + D-glyceraldehyde 3-phosphate = D-erythrose 4-phosphate + beta-D-fructose 6-phosphate. It participates in carbohydrate degradation; pentose phosphate pathway; D-glyceraldehyde 3-phosphate and beta-D-fructose 6-phosphate from D-ribose 5-phosphate and D-xylulose 5-phosphate (non-oxidative stage): step 2/3. Functionally, transaldolase is important for the balance of metabolites in the pentose-phosphate pathway. The chain is Transaldolase from Leptothrix cholodnii (strain ATCC 51168 / LMG 8142 / SP-6) (Leptothrix discophora (strain SP-6)).